Here is a 757-residue protein sequence, read N- to C-terminus: Filensin (757 aa).

The tract at residues 1-39 is head; the sequence is MYRRSYVFQTRKEQYERAEEAPRAAEPDRLAEARAAAPN. Ser-5 carries the phosphoserine modification. The region spanning 39-319 is the IF rod domain; the sequence is NLAALQGLGE…RIIENEGNRL (281 aa). Positions 40 to 74 are coil 1A; the sequence is LAALQGLGERVAAHVQRARALEQRHAVLRRQLDAF. Residue Ala-41 is modified to N-acetylalanine. Residues 75-83 are linker 1; it reads QRLDELAGP. The tract at residues 84 to 183 is coil 1B; it reads EDALARHVEG…RYKKNLLEIQ (100 aa). The segment at 184 to 200 is linker 12; sequence TYVTILQQIIQTTPQAA. The coil 2 stretch occupies residues 201–319; sequence AITSGMREEK…RIIENEGNRL (119 aa). A tail region spans residues 320 to 756; sequence SSAFIETPIT…KKLGEKGSSS (437 aa). Phosphoserine is present on residues Ser-340 and Ser-419. Disordered regions lie at residues 406-436 and 493-705; these read EGESKLEPGDEEASPPTQEGAPEDVPDGGKI and GVVV…PPRK. A lipid anchor (N-myristoyl glycine) is attached at Gly-433. Residues 493–512 are compositionally biased toward low complexity; that stretch reads GVVVSKGDDSVPPDSGVEPS. Residue Ser-512 is modified to Phosphoserine. A compositionally biased stretch (basic and acidic residues) spans 528 to 658; the sequence is QEKEDGLKEE…KQDDQKEEGA (131 aa). Copy 1 of the repeat occupies 532–545; it reads DGLKEEGGPPEGKG. The interval 532 to 622 is 7 X 14 AA tandem repeats; it reads DGLKEEGGPP…EEEGPLQKKE (91 aa). Residues 546–552 form a 2; truncated repeat; it reads EPPEGKG. Repeat copies occupy residues 553-566, 567-580, 581-594, 595-608, and 609-622. Residues Thr-628 and Thr-674 each carry the phosphothreonine modification. 3 positions are modified to phosphoserine: Ser-701, Ser-754, and Ser-755.

It belongs to the intermediate filament family. Part of a complex required for lens intermediate filament formation composed of BFSP1, BFSP2 and CRYAA. Identified in a complex that contains VIM, EZR, AHNAK, BFSP1, BFSP2, ANK2, PLEC, PRX and spectrin. Found in a complex composed of PPL (via C-terminal linker domain), BFSP1 and BFSP2 in the retinal lens. Within the complex interacts with BFSP2. Interacts (via C-terminus) with MIP (via C-terminus) in aged lens fiber cells. In terms of processing, proteolytically cleaved during lens cell fiber differentiation with increased fragmentation as fiber cell age increases. Post-translationally, myristoylated at Gly-433 following proteolytic cleavage at Asp-432. Acetylated at Ala-41 following proteolytic cleavage at Leu-40. As to expression, abundantly expressed in both the inner and outer cortex of the retina, expressed at a lower level in the nucleus of the retina (at protein level). Detected in eye lens fiber cells (at protein level).

Its subcellular location is the cell membrane. The protein resides in the cytoplasm. The protein localises to the cytoskeleton. It is found in the cell cortex. In terms of biological role, required for the correct formation of lens intermediate filaments as part of a complex composed of BFSP1, BFSP2 and CRYAA. Involved in altering the calcium regulation of MIP water permeability. The chain is Filensin (BFSP1) from Bos taurus (Bovine).